A 279-amino-acid chain; its full sequence is Putative cysteine-rich repeat secretory protein 22 (279 aa).

A signal peptide spans 1–31 (MSSSSASKLLGSVLVFAMISVQIVFIHCVMS). Gnk2-homologous domains lie at 44–146 (YLHH…PINS) and 152–276 (YEYN…LYRF).

This sequence belongs to the cysteine-rich repeat secretory protein family.

It is found in the secreted. The polypeptide is Putative cysteine-rich repeat secretory protein 22 (CRRSP22) (Arabidopsis thaliana (Mouse-ear cress)).